The sequence spans 70 residues: Plasticin-S1 (70 aa).

Positions 1–22 (MAFLKKSLFLVLFLALVPLSIC) are cleaved as a signal peptide. Positions 23–45 (EEEKREGENEKEQEDDNQSEEKR) are excised as a propeptide. Residues 25–45 (EKREGENEKEQEDDNQSEEKR) form a disordered region.

It belongs to the frog skin active peptide (FSAP) family. Plasticin subfamily. In terms of tissue distribution, expressed by the skin glands.

It is found in the secreted. Functionally, the native peptide is a cationic amphipathic alpha-helical antimicrobial peptide with potent activity against both Gram-positive and Gram-negative bacteria. It has weak activity against fungi and shows low hemolytic activity. This is Plasticin-S1 from Phyllomedusa sauvagei (Sauvage's leaf frog).